The primary structure comprises 275 residues: Large ribosomal subunit protein uL2c (275 aa).

Disordered regions lie at residues 36–56 and 224–275; these read KNHR…HRGK and VMNP…RKRK. Basic residues predominate over residues 255–275; sequence LGRKTRKKPKYSNRYILRKRK.

It belongs to the universal ribosomal protein uL2 family. As to quaternary structure, part of the 50S ribosomal subunit.

The protein localises to the plastid. It localises to the chloroplast. The chain is Large ribosomal subunit protein uL2c (rpl2) from Gracilaria tenuistipitata var. liui (Red alga).